The sequence spans 247 residues: 2,3-bisphosphoglycerate-dependent phosphoglycerate mutase (247 aa).

Residues 8 to 15 (RHGESTWN), 21 to 22 (TG), Arg-60, 87 to 90 (ERHY), Lys-98, 114 to 115 (RR), and 183 to 184 (GN) each bind substrate. The active-site Tele-phosphohistidine intermediate is the His-9. Glu-87 (proton donor/acceptor) is an active-site residue.

Belongs to the phosphoglycerate mutase family. BPG-dependent PGAM subfamily. As to quaternary structure, homodimer.

It catalyses the reaction (2R)-2-phosphoglycerate = (2R)-3-phosphoglycerate. It functions in the pathway carbohydrate degradation; glycolysis; pyruvate from D-glyceraldehyde 3-phosphate: step 3/5. Its function is as follows. Catalyzes the interconversion of 2-phosphoglycerate and 3-phosphoglycerate. This is 2,3-bisphosphoglycerate-dependent phosphoglycerate mutase from Paracidovorax citrulli (strain AAC00-1) (Acidovorax citrulli).